The primary structure comprises 372 residues: Glutamate 5-kinase (372 aa).

K14 contributes to the ATP binding site. Residues S54, D141, and N153 each contribute to the substrate site. ATP contacts are provided by residues 173–174 (TD) and 215–221 (TGGMATK). The region spanning 280-358 (RGKLILDQGA…DDIESLLGYD (79 aa)) is the PUA domain.

The protein belongs to the glutamate 5-kinase family.

The protein localises to the cytoplasm. The enzyme catalyses L-glutamate + ATP = L-glutamyl 5-phosphate + ADP. It participates in amino-acid biosynthesis; L-proline biosynthesis; L-glutamate 5-semialdehyde from L-glutamate: step 1/2. Its function is as follows. Catalyzes the transfer of a phosphate group to glutamate to form L-glutamate 5-phosphate. The chain is Glutamate 5-kinase from Shewanella sediminis (strain HAW-EB3).